Consider the following 587-residue polypeptide: Protein IQ-DOMAIN 31 (587 aa).

A disordered region spans residues 57 to 80 (ETNTVDRSGGMLETQNVGPEEISD). S79 bears the Phosphoserine mark. IQ domains follow at residues 112–140 (REIA…GIIR), 141–163 (LQAL…SVMG), and 164–188 (IVRL…VYRK). Residues 149–159 (LVRRQAVATLF) form a calmodulin-binding region. A Nuclear localization signal motif is present at residues 176–183 (IRKSDIGV). Residues 344 to 587 (NPVVESSIQP…AKTTPAERKR (244 aa)) form a disordered region. Composition is skewed to basic and acidic residues over residues 357 to 373 (PRKE…KTRE) and 390 to 413 (CDEK…EMEV). Residues 424–434 (ALDSSLVNQID) show a composition bias toward polar residues. Composition is skewed to basic and acidic residues over residues 435–472 (SNEK…ENQK) and 482–494 (KTER…HHET). Composition is skewed to polar residues over residues 495-506 (SPSIPSYMQATK) and 544-561 (RITS…SGDK).

It belongs to the IQD family. Binds to multiple calmodulin (CaM) in the presence of Ca(2+) and CaM-like proteins.

It is found in the nucleus. The protein localises to the nucleus envelope. The protein resides in the cytoplasm. Its subcellular location is the cytoskeleton. It localises to the cell membrane. In terms of biological role, may be involved in cooperative interactions with calmodulins or calmodulin-like proteins. Recruits calmodulin proteins to microtubules, thus being a potential scaffold in cellular signaling and trafficking. May associate with nucleic acids and regulate gene expression at the transcriptional or post-transcriptional level. In Arabidopsis thaliana (Mouse-ear cress), this protein is Protein IQ-DOMAIN 31.